We begin with the raw amino-acid sequence, 263 residues long: Large ribosomal subunit protein uL23m (263 aa).

The N-terminal 45 residues, 1–45 (MPRLTVGTKNMLYPLQKTLAVGSCKPEQVPIRSLASVVESSSKIL), are a transit peptide targeting the mitochondrion.

This sequence belongs to the universal ribosomal protein uL23 family. Component of the mitochondrial large ribosomal subunit (mt-LSU). Mature yeast 74S mitochondrial ribosomes consist of a small (37S) and a large (54S) subunit. The 37S small subunit contains a 15S ribosomal RNA (15S mt-rRNA) and 34 different proteins. The 54S large subunit contains a 21S rRNA (21S mt-rRNA) and 46 different proteins. uL23m forms the wall of the exit tunnel. Interacts with the C-terminus of OXA1.

It is found in the mitochondrion. Its function is as follows. Component of the mitochondrial ribosome (mitoribosome), a dedicated translation machinery responsible for the synthesis of mitochondrial genome-encoded proteins, including at least some of the essential transmembrane subunits of the mitochondrial respiratory chain. The mitoribosomes are attached to the mitochondrial inner membrane and translation products are cotranslationally integrated into the membrane. The chain is Large ribosomal subunit protein uL23m (MRP20) from Saccharomyces cerevisiae (strain ATCC 204508 / S288c) (Baker's yeast).